The primary structure comprises 904 residues: Envelope glycoprotein B (904 aa).

The N-terminal stretch at Met-1–Ala-30 is a signal peptide. The Virion surface portion of the chain corresponds to Ala-31 to Pro-774. Positions Pro-32–Ala-52 are enriched in low complexity. Residues Pro-32–Ala-88 are disordered. 2 N-linked (GlcNAc...) asparagine; by host glycosylation sites follow: Asn-87 and Asn-141. Cystine bridges form between Cys-116/Cys-573, Cys-133/Cys-529, Cys-207/Cys-271, Cys-364/Cys-412, and Cys-596/Cys-633. Involved in fusion and/or binding to host membrane stretches follow at residues Val-173–Tyr-179 and Arg-258–Tyr-265. Asn-398 and Asn-430 each carry an N-linked (GlcNAc...) asparagine; by host glycan. The disordered stretch occupies residues Arg-470–Val-492. A compositionally biased stretch (pro residues) spans Pro-476 to Gly-485. The N-linked (GlcNAc...) asparagine; by host glycan is linked to Asn-489. N-linked (GlcNAc...) asparagine; by host glycosylation is present at Asn-674. The tract at residues Ile-719–Ser-772 is hydrophobic membrane proximal region. A helical transmembrane segment spans residues Phe-775 to Phe-795. Residues Arg-796 to Leu-904 lie on the Intravirion side of the membrane. The short motif at Tyr-849–Leu-852 is the Golgi targeting element. The interval Lys-883–Leu-904 is disordered. A Phosphothreonine; by host modification is found at Thr-887. An Internalization motif motif is present at residues Tyr-889 to Val-892.

This sequence belongs to the herpesviridae glycoprotein B family. As to quaternary structure, homotrimer; disulfide-linked. Interacts with host receptor MYH9/NMMHC-IIA. Interacts with host receptor MYH10/NMMHC-IIB. Binds to heparan sulfate proteoglycans. Interacts with gH/gL heterodimer. Interacts with the host coreceptor PILRA. In terms of processing, the cytoplasmic tail is phosphorylated by the viral kinase US3. Phosphorylation may be linked to a down-regulation of gB expression on cell surface. Ubiquitinated.

The protein localises to the virion membrane. It is found in the host cell membrane. Its subcellular location is the host endosome membrane. The protein resides in the host Golgi apparatus membrane. In terms of biological role, envelope glycoprotein that forms spikes at the surface of virion envelope and binds to the host cell entry receptors MYH9/NMMHC-IIA and MYH10/NMMHC-IIB, promoting the virus entry into host cells. Essential for the initial attachment to heparan sulfate moieties of the host cell surface proteoglycans. Involved in fusion of viral and cellular membranes leading to virus entry into the host cell: following initial binding to its host cell entry receptors, membrane fusion is mediated by the fusion machinery composed at least of gB and the heterodimer gH/gL. May be involved in the fusion between the virion envelope and the outer nuclear membrane during virion egress. Also plays a role, together with gK, in virus-induced cell-to-cell fusion (syncytia formation). The polypeptide is Envelope glycoprotein B (Human herpesvirus 1 (strain KOS) (HHV-1)).